Reading from the N-terminus, the 368-residue chain is Histidinol-phosphate aminotransferase (368 aa).

K224 is modified (N6-(pyridoxal phosphate)lysine).

Belongs to the class-II pyridoxal-phosphate-dependent aminotransferase family. Histidinol-phosphate aminotransferase subfamily. In terms of assembly, homodimer. Requires pyridoxal 5'-phosphate as cofactor.

The catalysed reaction is L-histidinol phosphate + 2-oxoglutarate = 3-(imidazol-4-yl)-2-oxopropyl phosphate + L-glutamate. It functions in the pathway amino-acid biosynthesis; L-histidine biosynthesis; L-histidine from 5-phospho-alpha-D-ribose 1-diphosphate: step 7/9. This chain is Histidinol-phosphate aminotransferase, found in Agrobacterium fabrum (strain C58 / ATCC 33970) (Agrobacterium tumefaciens (strain C58)).